The primary structure comprises 466 residues: Probable multidrug resistance protein NorM (466 aa).

11 helical membrane passes run 68 to 90 (AHTVYFVSFTFGLGLMAAVSPLV), 110 to 132 (LWVALLISLPMMASPLYGEHILI), 142 to 164 (ALAQRYLNGLAWGIAPALGFIAL), 177 to 199 (PLWITVAAIPVNAALVYVLIHGL), 209 to 231 (GAGLATTLVNLGTFLAVLAIAAW), 251 to 273 (LVRQLIALGAPISSSLLLEYGLF), 288 to 310 (LAAHQIALQVTAVLFMVPLGIGM), 331 to 353 (AGLVAAVLGVALVSALTVAIILG), 368 to 387 (SAATVELTATLLLVGATFFI), 407 to 429 (MTLAFAAIGYWCVAFPVAWVLAF), and 433 to 455 (LGAVGVWIGFSIGTFVYAGLLVL).

Belongs to the multi antimicrobial extrusion (MATE) (TC 2.A.66.1) family.

Its subcellular location is the cell inner membrane. Its function is as follows. Multidrug efflux pump. The polypeptide is Probable multidrug resistance protein NorM (norM) (Bradyrhizobium diazoefficiens (strain JCM 10833 / BCRC 13528 / IAM 13628 / NBRC 14792 / USDA 110)).